The primary structure comprises 162 residues: MARVEL domain-containing protein 1 (162 aa).

The Cytoplasmic segment spans residues Met-1–Ser-17. Residues Phe-14–Cys-155 form the MARVEL domain. A helical membrane pass occupies residues Phe-18–Ala-38. The Extracellular segment spans residues Ala-39–His-47. The chain crosses the membrane as a helical span at residues Phe-48–Leu-68. The Cytoplasmic portion of the chain corresponds to Leu-69–Ser-86. Residues Asn-87–Tyr-107 form a helical membrane-spanning segment. At Lys-108 to Lys-127 the chain is on the extracellular side. The chain crosses the membrane as a helical span at residues Val-128–Ile-148. Residues Tyr-149–Val-162 are Cytoplasmic-facing.

Its subcellular location is the membrane. The protein localises to the nucleus. In Danio rerio (Zebrafish), this protein is MARVEL domain-containing protein 1 (marveld1).